The following is a 329-amino-acid chain: MATIHFTKVHGSQNDFFLVDEEENLITEWSDEQRADFAIKLCDRKHSLGGADGILYVTKSSEVGPIGQMRVVNSDGSIASMCGNGLRTVARYLLEKHALTEAKVETMKAILDVKKATSLGFDIPTYQVEISPVKFAAETLPMHVGVEKLFNQVIPELDTELAFSAVSVPNPHLITFVDQSVLDSDKQEKLASYLNSENPYFPDGVNVSFVKRLSDDAIYVRTFERGVGFTNACGTAMSACSLIKKMLDNDTFETPLNVYNDGGRVQVTAKEDAAGEISLQLIGNATFVSKGSVRYENDIVTELTNEATAEQALYQALVKEVKEFLKTTE.

Positions 14 and 73 each coordinate substrate. The active-site Proton donor is Cys82. Residues 83–84 (GN), Asn170, Asn206, and 224–225 (ER) contribute to the substrate site. Cys233 serves as the catalytic Proton acceptor. Residue 234 to 235 (GT) coordinates substrate.

This sequence belongs to the diaminopimelate epimerase family. As to quaternary structure, homodimer.

It is found in the cytoplasm. It carries out the reaction (2S,6S)-2,6-diaminopimelate = meso-2,6-diaminopimelate. Its pathway is amino-acid biosynthesis; L-lysine biosynthesis via DAP pathway; DL-2,6-diaminopimelate from LL-2,6-diaminopimelate: step 1/1. Catalyzes the stereoinversion of LL-2,6-diaminopimelate (L,L-DAP) to meso-diaminopimelate (meso-DAP), a precursor of L-lysine and an essential component of the bacterial peptidoglycan. The chain is Diaminopimelate epimerase from Listeria monocytogenes serotype 4a (strain HCC23).